We begin with the raw amino-acid sequence, 150 residues long: Dynein light chain Tctex-type protein 2B (150 aa).

Belongs to the dynein light chain Tctex-type family.

Its subcellular location is the dynein axonemal particle. Its function is as follows. Acts as one of several non-catalytic accessory components of the cytoplasmic dynein 2 complex (dynein-2 complex), a motor protein complex that drives the movement of cargos along microtubules within cilia and flagella in concert with the intraflagellar transport (IFT) system. Required for proper retrograde ciliary transport. This is Dynein light chain Tctex-type protein 2B (dynlt2b) from Danio rerio (Zebrafish).